The primary structure comprises 359 residues: Serpentine receptor class epsilon-13 (359 aa).

Transmembrane regions (helical) follow at residues 33–53 (YLFVFYIQIALIFIVLFYYLL), 74–94 (AIYLPCVLGHVMCLIQKILLI), 111–131 (ISLFRAIFCFPGFYCLSAFVA), 150–170 (WLVGLILWIIYSIAFISALDF), 180–200 (VTIFILLSCLAYLSNYLNFLL), 237–257 (LALSIAFFQISGPMCLLIDNL), and 266–286 (LNTVVFDTILLLYAIVTPFVI).

This sequence belongs to the nematode receptor-like protein sre family.

The protein resides in the membrane. This is Serpentine receptor class epsilon-13 (sre-13) from Caenorhabditis elegans.